A 381-amino-acid polypeptide reads, in one-letter code: Lipid-A-disaccharide synthase (381 aa).

The protein belongs to the LpxB family.

It catalyses the reaction 2-N,3-O-bis[(3R)-3-hydroxytetradecanoyl]-alpha-D-glucosaminyl 1-phosphate + UDP-2-N,3-O-bis[(3R)-3-hydroxytetradecanoyl]-alpha-D-glucosamine = lipid A disaccharide (E. coli) + UDP + H(+). The catalysed reaction is a lipid X + a UDP-2-N,3-O-bis[(3R)-3-hydroxyacyl]-alpha-D-glucosamine = a lipid A disaccharide + UDP + H(+). It participates in glycolipid biosynthesis; lipid IV(A) biosynthesis; lipid IV(A) from (3R)-3-hydroxytetradecanoyl-[acyl-carrier-protein] and UDP-N-acetyl-alpha-D-glucosamine: step 5/6. Its function is as follows. Condensation of UDP-2,3-diacylglucosamine and 2,3-diacylglucosamine-1-phosphate to form lipid A disaccharide, a precursor of lipid A, a phosphorylated glycolipid that anchors the lipopolysaccharide to the outer membrane of the cell. This chain is Lipid-A-disaccharide synthase, found in Erwinia tasmaniensis (strain DSM 17950 / CFBP 7177 / CIP 109463 / NCPPB 4357 / Et1/99).